A 179-amino-acid polypeptide reads, in one-letter code: UPF0227 protein Sbal_2415 (179 aa).

The protein belongs to the UPF0227 family.

The chain is UPF0227 protein Sbal_2415 from Shewanella baltica (strain OS155 / ATCC BAA-1091).